We begin with the raw amino-acid sequence, 327 residues long: Probable cell division protein WhiA (327 aa).

Positions 275–308 form a DNA-binding region, H-T-H motif; that stretch reads SLEELGRLADPPMTKDAVAGRIRRLLSMADRKAK.

It belongs to the WhiA family.

Its function is as follows. Involved in cell division and chromosome segregation. The chain is Probable cell division protein WhiA from Mycobacterium bovis (strain ATCC BAA-935 / AF2122/97).